The chain runs to 222 residues: Protein-L-isoaspartate O-methyltransferase (222 aa).

Ser68 is an active-site residue.

This sequence belongs to the methyltransferase superfamily. L-isoaspartyl/D-aspartyl protein methyltransferase family.

It localises to the cytoplasm. It catalyses the reaction [protein]-L-isoaspartate + S-adenosyl-L-methionine = [protein]-L-isoaspartate alpha-methyl ester + S-adenosyl-L-homocysteine. In terms of biological role, catalyzes the methyl esterification of L-isoaspartyl residues in peptides and proteins that result from spontaneous decomposition of normal L-aspartyl and L-asparaginyl residues. It plays a role in the repair and/or degradation of damaged proteins. This Koribacter versatilis (strain Ellin345) protein is Protein-L-isoaspartate O-methyltransferase.